Here is a 163-residue protein sequence, read N- to C-terminus: NADH-quinone oxidoreductase subunit I (163 aa).

2 4Fe-4S ferredoxin-type domains span residues 55–84 (RRYE…IESE) and 94–123 (TQYD…ETRV). [4Fe-4S] cluster-binding residues include Cys64, Cys67, Cys70, Cys74, Cys103, Cys106, Cys109, and Cys113.

It belongs to the complex I 23 kDa subunit family. NDH-1 is composed of 14 different subunits. Subunits NuoA, H, J, K, L, M, N constitute the membrane sector of the complex. Requires [4Fe-4S] cluster as cofactor.

It is found in the cell inner membrane. It catalyses the reaction a quinone + NADH + 5 H(+)(in) = a quinol + NAD(+) + 4 H(+)(out). NDH-1 shuttles electrons from NADH, via FMN and iron-sulfur (Fe-S) centers, to quinones in the respiratory chain. The immediate electron acceptor for the enzyme in this species is believed to be ubiquinone. Couples the redox reaction to proton translocation (for every two electrons transferred, four hydrogen ions are translocated across the cytoplasmic membrane), and thus conserves the redox energy in a proton gradient. This chain is NADH-quinone oxidoreductase subunit I, found in Hydrogenovibrio crunogenus (strain DSM 25203 / XCL-2) (Thiomicrospira crunogena).